The primary structure comprises 1037 residues: Presequence protease, mitochondrial (1037 aa).

The N-terminal 28 residues, 1 to 28, are a transit peptide targeting the mitochondrion; the sequence is MWRCGGRQGLCVLRRLSGGHAHHRAWRW. Position 104 (histidine 104) interacts with Zn(2+). Catalysis depends on glutamate 107, which acts as the Proton acceptor. Residue histidine 108 coordinates Zn(2+). A disulfide bridge links cysteine 119 with cysteine 556. Glutamate 180 is an active-site residue. Glutamate 205 contacts Zn(2+). At lysine 759 the chain carries N6-acetyllysine. Lysine 770 carries the post-translational modification N6-acetyllysine; alternate. An N6-succinyllysine; alternate modification is found at lysine 770. Residues 804–814 are compositionally biased toward basic residues; that stretch reads GRSKKERRPVR. The disordered stretch occupies residues 804–834; it reads GRSKKERRPVRPHTVEKPVPSSSGGDAHVPH. Residue lysine 849 is modified to N6-succinyllysine. Residue lysine 884 is modified to N6-acetyllysine. An N6-succinyllysine modification is found at lysine 946.

The protein belongs to the peptidase M16 family. PreP subfamily. As to quaternary structure, monomer and homodimer; homodimerization is induced by binding of the substrate. It depends on Zn(2+) as a cofactor. A disulfide bond locks the enzyme in the closed conformation preventing substrate entry into the catalytic chamber. In terms of tissue distribution, widely expressed. Expressed at higher level in muscle and heart compared to brain, pancreas, liver, lung and placenta.

Its subcellular location is the mitochondrion. The protein localises to the mitochondrion matrix. With respect to regulation, mainly exists in a closed and catalytically competent conformation but a closed-to-open switch allows substrate entry into the catalytic chamber. Substrate binding induces closure and dimerization. A disulfide bond may lock the enzyme in a closed conformation preventing substrate entry into the catalytic chamber, participating in redox regulation of the enzyme. Inhibited by metal-chelating agents. Inhibited by nickel and zinc excess, and slightly activated by manganese. Its function is as follows. Metalloendopeptidase of the mitochondrial matrix that functions in peptide cleavage and degradation rather than in protein processing. Has an ATP-independent activity. Specifically cleaves peptides in the range of 5 to 65 residues. Shows a preference for cleavage after small polar residues and before basic residues, but without any positional preference. Degrades the transit peptides of mitochondrial proteins after their cleavage. Also degrades other unstructured peptides. It is also able to degrade amyloid-beta protein 40, one of the peptides produced by APP processing, when it accumulates in mitochondrion. It is a highly efficient protease, at least toward amyloid-beta protein 40. Cleaves that peptide at a specific position and is probably not processive, releasing digested peptides intermediates that can be further cleaved subsequently. It is also able to degrade amyloid-beta protein 42. This chain is Presequence protease, mitochondrial, found in Homo sapiens (Human).